The sequence spans 151 residues: Sigma factor binding protein 1, chloroplastic (151 aa).

The span at 1 to 13 (MESSSSTFLTTTS) shows a compositional bias: low complexity. 2 disordered regions span residues 1 to 41 (MESS…KPIK) and 66 to 93 (TGQDAVDLQPEPIYSPSSDDHNLSPPAE). The transit peptide at 1–54 (MESSSSTFLTTTSLDKKKPSPVSRKSPKQKKKTTSTNKPIKVRYISNPMRVQTC) directs the protein to the chloroplast. A Bipartite nuclear localization signal motif is present at residues 16-32 (KKKPSPVSRKSPKQKKK). The short motif at 58 to 67 (FRELVQELTG) is the VQ element.

As to quaternary structure, interacts with the sigma factor SIGA in chloroplast. Interacts with WRKY25 and WRKY33 in the nucleus. As to expression, expressed in leaves and roots, but not in flowers.

It is found in the plastid. Its subcellular location is the chloroplast. The protein resides in the nucleus. Functionally, contributes to plant defense. May regulate chloroplast metabolism upon infection with pathogens such as Pseudomonas syringae. Functions as activator of WRKY33 in plant defense against necrotrophic pathogens by stimulating the DNA-binding activity of WRKY33. This chain is Sigma factor binding protein 1, chloroplastic (SIB1), found in Arabidopsis thaliana (Mouse-ear cress).